Consider the following 200-residue polypeptide: MSEALNELATYLTEVRGALISSSEIKYGELNVTTTAENVIALLTFLRDDAKCGFVNMTDICGVDWPQRPDRFDVVYHLLSPKKNLRIRIKVPVAEDQPVPSACGIYPGADWFERETWDMYGVLFTGHPDLRRILTDYGFEGHPLRKDFPTTGFVEVRYDDAAKRVVYEPVELKQEFRNFDFLSPWEGTDYVLPGDEKAKA.

The protein belongs to the complex I 30 kDa subunit family. In terms of assembly, NDH-1 is composed of 14 different subunits. Subunits NuoB, C, D, E, F, and G constitute the peripheral sector of the complex.

Its subcellular location is the cell inner membrane. The enzyme catalyses a quinone + NADH + 5 H(+)(in) = a quinol + NAD(+) + 4 H(+)(out). Functionally, NDH-1 shuttles electrons from NADH, via FMN and iron-sulfur (Fe-S) centers, to quinones in the respiratory chain. The immediate electron acceptor for the enzyme in this species is believed to be ubiquinone. Couples the redox reaction to proton translocation (for every two electrons transferred, four hydrogen ions are translocated across the cytoplasmic membrane), and thus conserves the redox energy in a proton gradient. The protein is NADH-quinone oxidoreductase subunit C of Rhizobium rhizogenes (strain K84 / ATCC BAA-868) (Agrobacterium radiobacter).